A 265-amino-acid polypeptide reads, in one-letter code: UPF0026 protein slr1464 (265 aa).

Residues Arg-16–Ala-252 enclose the Radical SAM core domain. The [4Fe-4S] cluster site is built by Cys-32, Cys-36, and Cys-39. Residues Arg-204–Pro-230 form a disordered region.

It belongs to the UPF0026 family. It depends on [4Fe-4S] cluster as a cofactor.

In Synechocystis sp. (strain ATCC 27184 / PCC 6803 / Kazusa), this protein is UPF0026 protein slr1464.